The primary structure comprises 988 residues: Ubiquitin carboxyl-terminal hydrolase 36 (988 aa).

The disordered stretch occupies residues 16 to 55 (PTLRTDNNGARKQAEHPNNQSHHNHPHPTSNPNELPKPKR). Low complexity predominate over residues 31 to 48 (HPNNQSHHNHPHPTSNPN). The USP domain occupies 78–386 (TGMINVGNTC…NAYIMFFELD (309 aa)). Cys-87 (nucleophile) is an active-site residue. The active-site Proton acceptor is the His-345. 3 disordered regions span residues 393 to 422 (PPAN…SPSP), 483 to 782 (ATSA…VTSN), and 868 to 988 (EQRQ…QQQT). Low complexity-rich tracts occupy residues 408-422 (STTP…SPSP) and 490-509 (NGNK…KSIN). Phosphoserine is present on residues Ser-419 and Ser-421. Residues 532–544 (TTAQLPSMPNMTE) are compositionally biased toward polar residues. A phosphothreonine mark is found at Thr-561 and Thr-565. Phosphoserine occurs at positions 575 and 577. A compositionally biased stretch (acidic residues) spans 592-601 (EGEDFSESDQ). Polar residues predominate over residues 602–631 (ESGQTNGHSKTNGSLTNGSASSSVHVNNSK). The span at 632 to 649 (QKTDAIDEIFKSLKKSAD) shows a compositional bias: basic and acidic residues. Ser-650 carries the post-translational modification Phosphoserine. Over residues 650-659 (SEEDDDEEEP) the composition is skewed to acidic residues. Residues 669–679 (PQKQSQSQSKA) show a composition bias toward low complexity. Residues 680–689 (PPSPKTPPSP) are compositionally biased toward pro residues. Ser-682 is modified (phosphoserine). Thr-685 carries the post-translational modification Phosphothreonine. The residue at position 688 (Ser-688) is a Phosphoserine. Residues 707–717 (VDAIDDDDDAV) show a composition bias toward acidic residues. Residue Thr-728 is modified to Phosphothreonine. Residues 735–747 (NPFSSSKPSTDSP) are compositionally biased toward polar residues. The residue at position 746 (Ser-746) is a Phosphoserine. Residue Thr-749 is modified to Phosphothreonine. Over residues 762–782 (ALKSHQQPRVGNGYQSNVTSN) the composition is skewed to polar residues. Low complexity-rich tracts occupy residues 892-903 (SGSAKGNNASNS) and 930-943 (RFHN…FQQR).

This sequence belongs to the peptidase C19 family. In terms of assembly, interacts with atms/PAF1, but not with CycT.

It localises to the nucleus. The protein localises to the nucleolus. The catalysed reaction is Thiol-dependent hydrolysis of ester, thioester, amide, peptide and isopeptide bonds formed by the C-terminal Gly of ubiquitin (a 76-residue protein attached to proteins as an intracellular targeting signal).. Required for maintaining multiple types of adult stem cells, including male and female germline, epithelial follicle cell and intestinal stem cells. May function as a transcriptional repressor by continually deubiquiting histone H2B at the promoters of genes critical for cellular differentiation, thereby preventing histone H3 'Lys-4' trimethylation (H3K4). Controls selective autophagy activation by ubiquitinated proteins. The sequence is that of Ubiquitin carboxyl-terminal hydrolase 36 (Usp36) from Drosophila simulans (Fruit fly).